A 215-amino-acid chain; its full sequence is Phosphoribosylglycinamide formyltransferase (215 aa).

(6R)-10-formyltetrahydrofolate contacts are provided by residues Arg74, 99–102 (MRIL), and Asn116. The active-site Proton donor is the His118.

Belongs to the GART family.

The enzyme catalyses N(1)-(5-phospho-beta-D-ribosyl)glycinamide + (6R)-10-formyltetrahydrofolate = N(2)-formyl-N(1)-(5-phospho-beta-D-ribosyl)glycinamide + (6S)-5,6,7,8-tetrahydrofolate + H(+). It participates in purine metabolism; IMP biosynthesis via de novo pathway; N(2)-formyl-N(1)-(5-phospho-D-ribosyl)glycinamide from N(1)-(5-phospho-D-ribosyl)glycinamide (10-formyl THF route): step 1/1. In terms of biological role, catalyzes the transfer of a formyl group from 10-formyltetrahydrofolate to 5-phospho-ribosyl-glycinamide (GAR), producing 5-phospho-ribosyl-N-formylglycinamide (FGAR) and tetrahydrofolate. The chain is Phosphoribosylglycinamide formyltransferase from Mycobacterium tuberculosis (strain CDC 1551 / Oshkosh).